The sequence spans 541 residues: MATDGSDPIPPHKTFDTILVLDFGSQYTHLITRRLRELNVYSEMLPCNTKLADLPFTPKGIILSGGPYSVYEEGAPHVDHAVFDLGVPILGICYGLQEMAWHFGKNAGVAAGEKREYGHANLKVESHGGHMDELFKDVGNELEVWMSHGDKLSNMPENFTTVATTTNAPFAGIAHKEKKYYGIQFHPEVTHTKMGKTVLKNFAVDICQSTTDWTMGKFVDQEITRIRKLVGEKGQVIGAVSGGVDSTVAAKLMKEAIGDRFHAVMVDNGVLRLNEAKQVKETLEKGLGINLTVIDASDMFLDRLKGITDNPEQKRKVIGNTFIEIFQEKAKEIAAAAKNSSNAGEIEWLLQGTLYPDVIESLSFKGPSQTIKTHHNVGGLPANMNLKLIEPLRELFKDEVRALGVELGIPEDLVWRHPFPGPGIAIRILGEVTREQVRIAREADYIFIEEIKAAGLYRNISQAFAALLPVKAVGVMGDKRVHDQVIALRAVETTDFMTADWYPFDGEFLKRVSRRIVNEVNGVCRVVYDITSKPPGTIEME.

The 196-residue stretch at 17-212 folds into the Glutamine amidotransferase type-1 domain; the sequence is TILVLDFGSQ…AVDICQSTTD (196 aa). The active-site Nucleophile is the cysteine 93. Residues histidine 186 and glutamate 188 contribute to the active site. The GMPS ATP-PPase domain occupies 213–416; it reads WTMGKFVDQE…LGIPEDLVWR (204 aa). ATP is bound at residue 241–247; that stretch reads SGGVDST. 4 residues coordinate XMP: arginine 315, aspartate 478, lysine 533, and glutamate 539.

As to quaternary structure, homodimer. Mg(2+) is required as a cofactor.

The protein localises to the cytoplasm. It is found in the cytosol. The catalysed reaction is XMP + L-glutamine + ATP + H2O = GMP + L-glutamate + AMP + diphosphate + 2 H(+). It functions in the pathway purine metabolism; GMP biosynthesis; GMP from XMP (L-Gln route): step 1/1. Catalyzes the conversion of xanthine monophosphate (XMP) to GMP in the presence of glutamine and ATP through an adenyl-XMP intermediate. The protein is GMP synthase [glutamine-hydrolyzing] (GUA1) of Phaeosphaeria nodorum (strain SN15 / ATCC MYA-4574 / FGSC 10173) (Glume blotch fungus).